Here is a 103-residue protein sequence, read N- to C-terminus: Large ribosomal subunit protein bL21 (103 aa).

The protein belongs to the bacterial ribosomal protein bL21 family. In terms of assembly, part of the 50S ribosomal subunit. Contacts protein L20.

In terms of biological role, this protein binds to 23S rRNA in the presence of protein L20. This is Large ribosomal subunit protein bL21 from Shewanella pealeana (strain ATCC 700345 / ANG-SQ1).